Here is a 443-residue protein sequence, read N- to C-terminus: Frizzled/smoothened-like sans CRD protein E (443 aa).

Positions 1–23 (MISHIKKFINLYTIVFLLYILYS) are cleaved as a signal peptide. Residues 24-83 (NENFFVKGQKLPPGFCPSPLIYRNTTDRQSDIDIGFQFLGETNCVQPCPSLILTENEWNK) lie on the Extracellular side of the membrane. A glycan (N-linked (GlcNAc...) asparagine) is linked at N47. A helical membrane pass occupies residues 84–104 (VFNMSLVAGTISMFALIFLII). Residues 105 to 120 (TYSPLVNNIKDYTRHT) lie on the Cytoplasmic side of the membrane. The chain crosses the membrane as a helical span at residues 121–141 (VGILFLFSGILIAMTTDGRQL). Topologically, residues 142–166 (WDIDLGFKKYCPEPGRFARQSDSKC) are extracellular. The chain crosses the membrane as a helical span at residues 167-187 (LVTAIFFQFGCVTALLWWAAI). The Cytoplasmic segment spans residues 188 to 203 (SVDLWITIKKIKISKK). Residues 204–224 (LFIIYTIAVNIVTIVLTFGPV) traverse the membrane as a helical segment. The Extracellular portion of the chain corresponds to 225–248 (GSKQYGYIDAAIGCWLMDLKYQVG). Residues 249–269 (YFWAPVGFCLCVGCVSIVLIL) traverse the membrane as a helical segment. Topologically, residues 270 to 289 (KEIYNVSDAVKKKLLAKHLK) are cytoplasmic. A helical membrane pass occupies residues 290 to 310 (PLMLIILMLTEFIYMFIFYSY). Residues 311–350 (TTSKKNHYHDIIEEYVVCLFVHAANPSVCKIGSTISPSAH) are Extracellular-facing. Residues 351–371 (FFFHLCIRLMGLEVLIFYGFT) form a helical membrane-spanning segment. Over 372-443 (RQTRKIWMRS…SGIDDSKHDP (72 aa)) the chain is Cytoplasmic. Composition is skewed to low complexity over residues 397–410 (SSSN…NKTS) and 419–432 (ESSE…QSIE). The interval 397 to 443 (SSSNDSKSSNNKTSGRVTGGFGESSEQSNEPEQSIELSGIDDSKHDP) is disordered.

Belongs to the G-protein coupled receptor Fz/Smo family.

The protein localises to the membrane. The protein is Frizzled/smoothened-like sans CRD protein E (fscE) of Dictyostelium discoideum (Social amoeba).